Here is a 596-residue protein sequence, read N- to C-terminus: Bromodomain-containing protein 9 (596 aa).

Over residues 1 to 10 (MGKKHKKHKA) the composition is skewed to basic residues. 2 disordered regions span residues 1–26 (MGKK…PLEK) and 38–137 (EVTE…AENE). Positions 50–62 (SYYDDRSDHERER) are enriched in basic and acidic residues. Ser-56 is modified (phosphoserine). Basic residues predominate over residues 63–73 (HREKKKKKKKK). A compositionally biased stretch (basic and acidic residues) spans 74-85 (SEKEKHLDEEER). Residues 86–97 (RKRKEEKKRKRE) are compositionally biased toward basic residues. Residues 111-126 (DPGKKVEVEPPPDRPV) are compositionally biased toward basic and acidic residues. The region spanning 136–240 (NESTPIQRLL…HAGFKMMSKA (105 aa)) is the Bromo domain. Residues 214 to 216 (TYN) are histone H4K5ac H4K8ac and histone H4K5bu H4K8bu binding. Lys-372 is modified (N6-acetyllysine; alternate). Lys-372 participates in a covalent cross-link: Glycyl lysine isopeptide (Lys-Gly) (interchain with G-Cter in SUMO2); alternate. Positions 536–596 (AQAERGGSRP…SPEPAAPAKN (61 aa)) are disordered. Over residues 543 to 555 (SRPSSNLSSLSTA) the composition is skewed to low complexity. 2 positions are modified to phosphoserine: Ser-565 and Ser-587.

Binds acetylated histones H3 and H4. Binds butyrylated histone H4. Component of the multiprotein chromatin-remodeling subcomplex SWI/SNF called GBAF, which includes at least BICRA or BICRAL (mutually exclusive), BRD9, SS18, the core BAF subunits, SMARCA2/BRM, SMARCA4/BRG1/BAF190A, ACTL6A/BAF53, SMARCC1/BAF155, and SMARCD1/BAF60A. Interacts (via N-terminal bromodomain) with acetylated RAD54. Interacts (via C-terminus) with RAD51.

It localises to the nucleus. Its function is as follows. Plays a role in chromatin remodeling and regulation of transcription. Acts as a chromatin reader that recognizes and binds acylated histones: binds histones that are acetylated and/or butyrylated. Component of SWI/SNF chromatin remodeling subcomplex GBAF that carries out key enzymatic activities, changing chromatin structure by altering DNA-histone contacts within a nucleosome in an ATP-dependent manner. Also orchestrates the RAD51-RAD54 complex formation and thereby plays a role in homologous recombination (HR). This Mus musculus (Mouse) protein is Bromodomain-containing protein 9 (Brd9).